A 1202-amino-acid chain; its full sequence is CHD3-type chromatin-remodeling factor CHR7 (1202 aa).

Chromo domains follow at residues 45 to 109 (GEIE…HPHL) and 142 to 201 (KTVD…RDKY). One can recognise a Helicase ATP-binding domain in the interval 237–405 (RYSWSKKTNV…FALMHFLDAD (169 aa)). ATP is bound at residue 250–257 (DEMGLGKT). The DEAH box signature appears at 356-359 (DEGH). Residues 528–679 (LLDKMMVKLK…HLVVGKQHLC (152 aa)) form the Helicase C-terminal domain. A disordered region spans residues 838-872 (TSDEEEEADEPEAARQRKPRTVTRPYRKRARDNSE). Positions 853–867 (QRKPRTVTRPYRKRA) are enriched in basic residues.

It belongs to the SNF2/RAD54 helicase family.

The protein localises to the nucleus. Functionally, chromatin remodeling factor that represses the expression of embryonic trait genes upon and after seed germination and thus enables the developmental switch to post-germinative growth. This chain is CHD3-type chromatin-remodeling factor CHR7, found in Arabidopsis thaliana (Mouse-ear cress).